Here is a 275-residue protein sequence, read N- to C-terminus: Autophagy protein 5 (275 aa).

Residue Met-1 is modified to N-acetylmethionine. Lys-130 participates in a covalent cross-link: Glycyl lysine isopeptide (Lys-Gly) (interchain with G-Cter in ATG12).

It belongs to the ATG5 family. In terms of assembly, forms a conjugate with ATG12. Part of the minor complex composed of 4 sets of ATG12-ATG5 and ATG16L1 (400 kDa); this complex interacts with ATG3 leading to disruption of ATG7 interaction and promotion of ATG8-like proteins lipidation. Forms an 800-kDa complex composed of ATG12-ATG5 and ATG16L2. The ATG12-ATG5 conjugate interacts with RAB33A; this interaction is bridged by ATG16L1 and promotes ATG12-ATG5-ATG16L1 complex recruitment to phagophores. Interacts with TECPR1; the interaction is direct and does not take place when ATG16L1 is associated with the ATG5-ATG12 conjugate. Interacts with DHX58/RIG-1, IFIH1/MDA5 and MAVS/IPS-1 in monomeric form as well as in ATG12-ATG5 conjugate form. The interaction with MAVS is further enhanced upon vesicular stomatitis virus (VSV) infection. Interacts with ATG3. Interacts with ATG7 and ATG10. Interacts with FADD. Interacts with Bassoon/BSN; this interaction is important for the regulation of presynaptic autophagy. Interacts with ATG16L2. In terms of processing, conjugated to ATG12; which is essential for autophagy, but is not required for association with isolation membrane. Acetylated by EP300.

The protein resides in the cytoplasm. It localises to the preautophagosomal structure membrane. Its function is as follows. Involved in autophagic vesicle formation. Conjugation with ATG12, through a ubiquitin-like conjugating system involving ATG7 as an E1-like activating enzyme and ATG10 as an E2-like conjugating enzyme, is essential for its function. The ATG12-ATG5 conjugate acts as an E3-like enzyme which is required for lipidation of ATG8 family proteins and their association to the vesicle membranes. Involved in mitochondrial quality control after oxidative damage, and in subsequent cellular longevity. Plays a critical role in multiple aspects of lymphocyte development and is essential for both B and T lymphocyte survival and proliferation. Required for optimal processing and presentation of antigens for MHC II. Involved in the maintenance of axon morphology and membrane structures, as well as in normal adipocyte differentiation. Promotes primary ciliogenesis through removal of OFD1 from centriolar satellites and degradation of IFT20 via the autophagic pathway. As part of the ATG8 conjugation system with ATG12 and ATG16L1, required for recruitment of LRRK2 to stressed lysosomes and induction of LRRK2 kinase activity in response to lysosomal stress. May play an important role in the apoptotic process, possibly within the modified cytoskeleton. Its expression is a relatively late event in the apoptotic process, occurring downstream of caspase activity. Plays a crucial role in IFN-gamma-induced autophagic cell death by interacting with FADD. This Pongo abelii (Sumatran orangutan) protein is Autophagy protein 5.